A 648-amino-acid polypeptide reads, in one-letter code: DNA ligase (648 aa).

NAD(+) contacts are provided by residues Asp-30–Asp-34 and Ser-79–Gln-80. Lys-110 (N6-AMP-lysine intermediate) is an active-site residue. Residues Arg-131, Glu-165, Lys-280, and Lys-304 each coordinate NAD(+). Positions 398, 401, 414, and 419 each coordinate Zn(2+). The BRCT domain occupies Val-573–Phe-648.

The protein belongs to the NAD-dependent DNA ligase family. LigA subfamily. Mg(2+) serves as cofactor. It depends on Mn(2+) as a cofactor.

It carries out the reaction NAD(+) + (deoxyribonucleotide)n-3'-hydroxyl + 5'-phospho-(deoxyribonucleotide)m = (deoxyribonucleotide)n+m + AMP + beta-nicotinamide D-nucleotide.. In terms of biological role, DNA ligase that catalyzes the formation of phosphodiester linkages between 5'-phosphoryl and 3'-hydroxyl groups in double-stranded DNA using NAD as a coenzyme and as the energy source for the reaction. It is essential for DNA replication and repair of damaged DNA. The protein is DNA ligase of Aliarcobacter butzleri (strain RM4018) (Arcobacter butzleri).